We begin with the raw amino-acid sequence, 247 residues long: Ubiquinone biosynthesis O-methyltransferase (247 aa).

Residues Arg45, Gly65, Asp86, and Leu130 each coordinate S-adenosyl-L-methionine.

This sequence belongs to the methyltransferase superfamily. UbiG/COQ3 family.

The enzyme catalyses a 3-demethylubiquinol + S-adenosyl-L-methionine = a ubiquinol + S-adenosyl-L-homocysteine + H(+). It catalyses the reaction a 3-(all-trans-polyprenyl)benzene-1,2-diol + S-adenosyl-L-methionine = a 2-methoxy-6-(all-trans-polyprenyl)phenol + S-adenosyl-L-homocysteine + H(+). The protein operates within cofactor biosynthesis; ubiquinone biosynthesis. O-methyltransferase that catalyzes the 2 O-methylation steps in the ubiquinone biosynthetic pathway. This is Ubiquinone biosynthesis O-methyltransferase from Alkalilimnicola ehrlichii (strain ATCC BAA-1101 / DSM 17681 / MLHE-1).